The sequence spans 396 residues: 2,3-diketo-5-methylthiopentyl-1-phosphate enolase (396 aa).

Lysine 85 (proton acceptor) is an active-site residue. Substrate is bound by residues lysine 134, lysine 160 to glutamate 163, histidine 251, glycine 323, and glycine 345 to glycine 346. Positions 160, 162, and 163 each coordinate Mg(2+). N6-carboxylysine is present on lysine 160.

Belongs to the RuBisCO large chain family. Type IV subfamily. As to quaternary structure, homodimer. Requires Mg(2+) as cofactor.

The catalysed reaction is 5-methylsulfanyl-2,3-dioxopentyl phosphate = 2-hydroxy-5-methylsulfanyl-3-oxopent-1-enyl phosphate. It participates in amino-acid biosynthesis; L-methionine biosynthesis via salvage pathway; L-methionine from S-methyl-5-thio-alpha-D-ribose 1-phosphate: step 3/6. Catalyzes the enolization of 2,3-diketo-5-methylthiopentyl-1-phosphate (DK-MTP-1-P) into 2-hydroxy-3-keto-5-methylthiopentenyl-1-phosphate (HK-MTPenyl-1-P). The protein is 2,3-diketo-5-methylthiopentyl-1-phosphate enolase of Exiguobacterium sibiricum (strain DSM 17290 / CCUG 55495 / CIP 109462 / JCM 13490 / 255-15).